Reading from the N-terminus, the 27-residue chain is iraD leader peptide (27 aa).

A short protein whose stop codon overlaps with the start codon of downstream iraD; its mRNA secondary structure is predicted to fold and sequester the Shine-Dalgarno sequence of iraD. When this protein is expressed the downstream iraD is also expressed due to ribosomal coupling. The polypeptide is iraD leader peptide (idlP) (Escherichia coli (strain K12)).